Here is a 175-residue protein sequence, read N- to C-terminus: Ribosome maturation factor RimM (175 aa).

One can recognise a PRC barrel domain in the interval P96–L172.

This sequence belongs to the RimM family. As to quaternary structure, binds ribosomal protein uS19.

The protein resides in the cytoplasm. An accessory protein needed during the final step in the assembly of 30S ribosomal subunit, possibly for assembly of the head region. Essential for efficient processing of 16S rRNA. May be needed both before and after RbfA during the maturation of 16S rRNA. It has affinity for free ribosomal 30S subunits but not for 70S ribosomes. The sequence is that of Ribosome maturation factor RimM from Mycobacterium avium (strain 104).